The sequence spans 377 residues: Probable O-methyltransferase 3 (377 aa).

Residue Asp241 participates in S-adenosyl-L-methionine binding. His279 (proton acceptor) is an active-site residue.

The protein belongs to the class I-like SAM-binding methyltransferase superfamily. Cation-independent O-methyltransferase family. Highly expressed in lupulin glands. Detected in early-, mid- and late-stage cones.

This Humulus lupulus (European hop) protein is Probable O-methyltransferase 3.